The chain runs to 345 residues: Phosphate acyltransferase (345 aa).

It belongs to the PlsX family. Homodimer. Probably interacts with PlsY.

The protein localises to the cytoplasm. The enzyme catalyses a fatty acyl-[ACP] + phosphate = an acyl phosphate + holo-[ACP]. The protein operates within lipid metabolism; phospholipid metabolism. In terms of biological role, catalyzes the reversible formation of acyl-phosphate (acyl-PO(4)) from acyl-[acyl-carrier-protein] (acyl-ACP). This enzyme utilizes acyl-ACP as fatty acyl donor, but not acyl-CoA. The chain is Phosphate acyltransferase from Trichlorobacter lovleyi (strain ATCC BAA-1151 / DSM 17278 / SZ) (Geobacter lovleyi).